A 311-amino-acid polypeptide reads, in one-letter code: Cyclin-dependent kinase B1-2 (311 aa).

One can recognise a Protein kinase domain in the interval Tyr4–Phe303. ATP contacts are provided by residues Val10–Val18 and Lys33. Tyr15 bears the Phosphotyrosine mark. The active-site Proton acceptor is Asp144. Thr178 carries the phosphothreonine modification.

This sequence belongs to the protein kinase superfamily. CMGC Ser/Thr protein kinase family. CDC2/CDKX subfamily. As to quaternary structure, interacts with CKS1. Expressed in flowers.

It catalyses the reaction L-seryl-[protein] + ATP = O-phospho-L-seryl-[protein] + ADP + H(+). The catalysed reaction is L-threonyl-[protein] + ATP = O-phospho-L-threonyl-[protein] + ADP + H(+). It carries out the reaction [DNA-directed RNA polymerase] + ATP = phospho-[DNA-directed RNA polymerase] + ADP + H(+). In terms of biological role, together with CDKB1-1, promotes both the last division in the stomatal cell lineage as well as the number of stomata. In collaboration with MYB124 and MYB88, restrict the G1/S transition and chloroplast and nuclear number during stomatal formation, and normally maintain fate and developmental progression throughout the stomatal cell lineage. In Arabidopsis thaliana (Mouse-ear cress), this protein is Cyclin-dependent kinase B1-2 (CDKB1-2).